Consider the following 525-residue polypeptide: Cytochrome P450 4V2 (525 aa).

Residues 13 to 33 (LLLWGAASALSLAGASLVLSL) traverse the membrane as a helical segment. Residues Glu-329 and Cys-467 each contribute to the heme site.

It belongs to the cytochrome P450 family. The cofactor is heme. In terms of tissue distribution, broadly expressed. Detected in heart, brain, placenta, lung, liver, skeletal muscle, kidney, pancreas, retina, retinal pigment epithelium (RPE) and lymphocytes.

It localises to the endoplasmic reticulum membrane. It catalyses the reaction dodecanoate + reduced [NADPH--hemoprotein reductase] + O2 = 12-hydroxydodecanoate + oxidized [NADPH--hemoprotein reductase] + H2O + H(+). It carries out the reaction tetradecanoate + reduced [NADPH--hemoprotein reductase] + O2 = 14-hydroxytetradecanoate + oxidized [NADPH--hemoprotein reductase] + H2O + H(+). The catalysed reaction is hexadecanoate + reduced [NADPH--hemoprotein reductase] + O2 = 16-hydroxyhexadecanoate + oxidized [NADPH--hemoprotein reductase] + H2O + H(+). The enzyme catalyses (5Z,8Z,11Z,14Z,17Z)-eicosapentaenoate + reduced [NADPH--hemoprotein reductase] + O2 = 20-hydroxy-(5Z,8Z,11Z,14Z,17Z)-eicosapentaenoate + oxidized [NADPH--hemoprotein reductase] + H2O + H(+). It catalyses the reaction (4Z,7Z,10Z,13Z,16Z,19Z)-docosahexaenoate + reduced [NADPH--hemoprotein reductase] + O2 = 22-hydroxy-(4Z,7Z,10Z,13Z,16Z,19Z)-docosahexaenoate + oxidized [NADPH--hemoprotein reductase] + H2O + H(+). Its pathway is lipid metabolism; fatty acid metabolism. Its activity is regulated as follows. Inhibited by N-hydroxy-N'-(4-n-butyl-2-methylphenyl formamidine)(HET0016) with an IC(50) of 38 nM. A cytochrome P450 monooxygenase involved in fatty acid metabolism in the eye. Catalyzes the omega-hydroxylation of polyunsaturated fatty acids (PUFAs) docosahexaenoate (DHA) and its precursor eicosapentaenoate (EPA), and may contribute to the homeostasis of these retinal PUFAs. Omega hydroxylates saturated fatty acids such as laurate, myristate and palmitate, the catalytic efficiency decreasing in the following order: myristate &gt; laurate &gt; palmitate (C14&gt;C12&gt;C16). Mechanistically, uses molecular oxygen inserting one oxygen atom into a substrate, and reducing the second into a water molecule, with two electrons provided by NADPH via cytochrome P450 reductase (CPR; NADPH-ferrihemoprotein reductase). This chain is Cytochrome P450 4V2 (CYP4V2), found in Homo sapiens (Human).